A 425-amino-acid chain; its full sequence is MAKQIQAIRGMNDILPTQSPLWQKVEAVLRASVAAYGYSEIRTPIVENTDLFKRSIGEVTDIVEKEMYTFEDRNGDSLTLRPEGTASTVRAGNEHGLLYNQEQRLWYMGPMFRHERPQKGRYRQFHQFGVEVYGIGSADIDAEVLMLSARLWEKLGISEHVTLELNTLGDPAERAAYREALIAFLEQHKDKLDEDSQRRMYSNPLRVLDSKDPQVQSILGDAPALMDYLGQESSQHFAQLRELLDAVGIQYRVNPRLVRGLDYYNRTVFEWVTNSLGSQGTVLAGGRYDGLVAQLGGKDTPAVGFAMGLERIVLLLETLELTQDIPAAVDVYVAAMGDSCLVEAIKVAQELRSTLPTLRVMSHCGGGNFKKQIKRADKSGAQVALLIGEEELAEGVVTVKYLRNDNEQQRVARNALSAFLAELTK.

The protein belongs to the class-II aminoacyl-tRNA synthetase family. In terms of assembly, homodimer.

Its subcellular location is the cytoplasm. It catalyses the reaction tRNA(His) + L-histidine + ATP = L-histidyl-tRNA(His) + AMP + diphosphate + H(+). This Shewanella sp. (strain MR-7) protein is Histidine--tRNA ligase.